Reading from the N-terminus, the 404-residue chain is BRCA1-A complex subunit Abraxas 1 (404 aa).

One can recognise an MPN domain in the interval 7-161 (YIRVSGFVLG…YAVYRSHGSQ (155 aa)). Residues 219-268 (MNNSLQGELKMACKKVEESERLVEKLLADVSDLRRMVNERKQELREISAD) are a coiled coil. The interval 339–404 (GRLGRGGGTS…NLDVSNSPVF (66 aa)) is disordered. Polar residues predominate over residues 391 to 404 (RNGNNLDVSNSPVF). Serine 401 bears the Phosphoserine mark. A pSXXF motif motif is present at residues 401-404 (SPVF).

Belongs to the FAM175 family. Abraxas subfamily. As to quaternary structure, component of the BRCA1-A complex. Component of the BRISC complex. Homodimer. Interacts directly (when phosphorylated at Ser-401) with brca1. The phosphorylated homodimer can interact directly with two brca1 chains, giving rise to a heterotetramer. In terms of processing, phosphorylation of Ser-401 of the pSXXF motif by ATM or ATR constitutes a specific recognition motif for the BRCT domain of BRCA1.

The protein resides in the nucleus. In terms of biological role, involved in DNA damage response and double-strand break (DSB) repair. Component of the BRCA1-A complex, acting as a central scaffold protein that assembles the various components of the complex and mediates the recruitment of brca1. The BRCA1-A complex specifically recognizes 'Lys-63'-linked ubiquitinated histones H2A and H2AX at DNA lesion sites, leading to target the brca1-bard1 heterodimer to sites of DNA damage at DSBs. This complex also possesses deubiquitinase activity that specifically removes 'Lys-63'-linked ubiquitin on histones H2A and H2AX. The protein is BRCA1-A complex subunit Abraxas 1 of Salmo salar (Atlantic salmon).